Consider the following 911-residue polypeptide: Protein translocase subunit SecA (911 aa).

ATP contacts are provided by residues Q87, 105–109, and D512; that span reads GEGKT. A disordered region spans residues 861–893; sequence APGLESEQLSEEGAEVAVASAPVRNDQKLGRNE. 4 residues coordinate Zn(2+): C895, C897, C906, and H907.

The protein belongs to the SecA family. In terms of assembly, monomer and homodimer. Part of the essential Sec protein translocation apparatus which comprises SecA, SecYEG and auxiliary proteins SecDF-YajC and YidC. Requires Zn(2+) as cofactor.

The protein localises to the cell inner membrane. The protein resides in the cytoplasm. It catalyses the reaction ATP + H2O + cellular proteinSide 1 = ADP + phosphate + cellular proteinSide 2.. Part of the Sec protein translocase complex. Interacts with the SecYEG preprotein conducting channel. Has a central role in coupling the hydrolysis of ATP to the transfer of proteins into and across the cell membrane, serving both as a receptor for the preprotein-SecB complex and as an ATP-driven molecular motor driving the stepwise translocation of polypeptide chains across the membrane. In Pseudomonas putida (strain ATCC 700007 / DSM 6899 / JCM 31910 / BCRC 17059 / LMG 24140 / F1), this protein is Protein translocase subunit SecA.